The chain runs to 71 residues: Large ribosomal subunit protein bL31 (71 aa).

Cysteine 16, cysteine 18, cysteine 38, and cysteine 41 together coordinate Zn(2+).

It belongs to the bacterial ribosomal protein bL31 family. Type A subfamily. Part of the 50S ribosomal subunit. Zn(2+) serves as cofactor.

Its function is as follows. Binds the 23S rRNA. This Francisella tularensis subsp. mediasiatica (strain FSC147) protein is Large ribosomal subunit protein bL31.